Here is a 353-residue protein sequence, read N- to C-terminus: MKFVDEVRIHVKAGDGGNGAVAWRREKFIPRGGPAGGDGGNGADVVLVVDPQLSTLLDYRYVREHRAKSGEHGQGSDMNGRDGEPLVLRVPPGTVVKDAATGELIADLGAADERLVVAKGGRGGLGNMNFATSTNQAPRYAEDGTLGEERDLVLELKLLADVGIVGYPNAGKSTLISRISRARPKIADYPFTTLVPNLGVVSWRERSFVVADIPGLIEGAHEGAGLGHQFLRHVERCRVLVHLVEGANPEEGRSPKADYEAINRELALYSPTLAEKPQILAVTKIDVPEARAAGEKLRKAFARRKQPVEVHLVSAVTGEGMPELMDAVGRALYAEAPRRGGRGRRLGKPRAEK.

Residues 1–159 (MKFVDEVRIH…RDLVLELKLL (159 aa)) form the Obg domain. One can recognise an OBG-type G domain in the interval 160 to 333 (ADVGIVGYPN…LMDAVGRALY (174 aa)). GTP contacts are provided by residues 166 to 173 (GYPNAGKS), 191 to 195 (FTTLV), 212 to 215 (DIPG), 283 to 286 (TKID), and 314 to 316 (SAV). Residues serine 173 and threonine 193 each contribute to the Mg(2+) site.

It belongs to the TRAFAC class OBG-HflX-like GTPase superfamily. OBG GTPase family. In terms of assembly, monomer. The cofactor is Mg(2+).

It is found in the cytoplasm. An essential GTPase which binds GTP, GDP and possibly (p)ppGpp with moderate affinity, with high nucleotide exchange rates and a fairly low GTP hydrolysis rate. Plays a role in control of the cell cycle, stress response, ribosome biogenesis and in those bacteria that undergo differentiation, in morphogenesis control. The polypeptide is GTPase Obg (Anaeromyxobacter sp. (strain Fw109-5)).